A 293-amino-acid polypeptide reads, in one-letter code: uncharacterized protein (293 aa).

In terms of domain architecture, HTH lysR-type spans methionine 1 to threonine 58. A DNA-binding region (H-T-H motif) is located at residues phenylalanine 18 to glutamine 37.

The protein belongs to the LysR transcriptional regulatory family.

This is an uncharacterized protein from Escherichia coli (strain K12).